A 293-amino-acid polypeptide reads, in one-letter code: tRNA-cytidine(32) 2-sulfurtransferase (293 aa).

The short motif at 62–67 (SGGKDS) is the PP-loop motif element. [4Fe-4S] cluster-binding residues include Cys137, Cys140, and Cys228.

It belongs to the TtcA family. In terms of assembly, homodimer. Mg(2+) serves as cofactor. [4Fe-4S] cluster is required as a cofactor.

The protein resides in the cytoplasm. The catalysed reaction is cytidine(32) in tRNA + S-sulfanyl-L-cysteinyl-[cysteine desulfurase] + AH2 + ATP = 2-thiocytidine(32) in tRNA + L-cysteinyl-[cysteine desulfurase] + A + AMP + diphosphate + H(+). The protein operates within tRNA modification. Functionally, catalyzes the ATP-dependent 2-thiolation of cytidine in position 32 of tRNA, to form 2-thiocytidine (s(2)C32). The sulfur atoms are provided by the cysteine/cysteine desulfurase (IscS) system. The protein is tRNA-cytidine(32) 2-sulfurtransferase of Brucella suis (strain ATCC 23445 / NCTC 10510).